The following is a 622-amino-acid chain: Cytochrome c oxidase subunit 1 (622 aa).

At 1 to 27 (MLNALTEKRTRGSMLWDYLTTVDHKKI) the chain is on the extracellular side. Residues 28–46 (AILYLVAGGFFFLVGGIEA) form a helical membrane-spanning segment. The Cytoplasmic portion of the chain corresponds to 47–68 (MFIRIQLAKPENAFLSAQAYNE). Residues 69 to 88 (VMTMHGTTMIFLAAMPLLFA) form a helical membrane-spanning segment. Histidine 73 contributes to the Fe(II)-heme a binding site. Residues 89-110 (LMNAVVPLQIGARDVSFPFLNA) lie on the Extracellular side of the membrane. The chain crosses the membrane as a helical span at residues 111 to 128 (LGFWLFFFGGIFLNLSWF). Residues 129 to 159 (LGGAPDAGWTSYASLSLHSKGHGIDFFVLGL) lie on the Cytoplasmic side of the membrane. A helical membrane pass occupies residues 160–178 (QISGLGTLIAGINFLATII). The Extracellular portion of the chain corresponds to 179-196 (NMRAPGMTYMRLPLFTWT). A helical transmembrane segment spans residues 197–215 (TFVASALILFAFPPLTVGL). Topologically, residues 216 to 241 (ALMMLDRLFGTNFFNPELGGNTVIWE) are cytoplasmic. A helical transmembrane segment spans residues 242 to 261 (HLFWIFGHPEVYILILPAFG). Cu cation is bound by residues histidine 249 and tyrosine 253. Residues 249–253 (HPEVY) constitute a cross-link (1'-histidyl-3'-tyrosine (His-Tyr)). Residues 262-284 (IFSEVIPVFARKRLFGYSSMVFA) are Extracellular-facing. Residues 285–304 (IVLIGFLGFMVWVHHMFTTG) form a helical membrane-spanning segment. Cu cation contacts are provided by histidine 298 and histidine 299. Topologically, residues 305-312 (LGPIANAI) are cytoplasmic. A helical membrane pass occupies residues 313 to 331 (FAVATMAIAIPTGIKIFNW). At 332-346 (LLTIWGGNVKYTTAM) the chain is on the extracellular side. A helical membrane pass occupies residues 347–366 (LYAVSFIPSFVLGGVTGVML). Topologically, residues 367 to 374 (AAAAADYQ) are cytoplasmic. A helical membrane pass occupies residues 375–394 (FHDTYFVVAHFHYVIIGGVV). Histidine 384 provides a ligand contact to heme a3. Histidine 386 contacts Fe(II)-heme a. The Extracellular segment spans residues 395–421 (FGLLAGVHFWWPKMFGKILHETMGKIS). A helical membrane pass occupies residues 422–441 (FVLFFIGFHLTFFIQHFVGL). Residues 442–459 (MGMPRRVYTFLPGQGLET) are Cytoplasmic-facing. Residues 460–479 (GNLISTIGAFFMAAAVILLL) form a helical membrane-spanning segment. Over 480 to 552 (VNVIWTSVKG…EPVDDIHMPN (73 aa)) the chain is Extracellular. Residues 553 to 572 (GSILPLIISFGLFVAAFGLL) form a helical membrane-spanning segment. Topologically, residues 573-580 (YRSDYAWG) are cytoplasmic. The chain crosses the membrane as a helical span at residues 581–604 (LPVIFIGLGITFITMLLRSVIDDH). The Cytoplasmic segment spans residues 605-622 (GYHIHKEELPNDDKGVKA).

The protein belongs to the heme-copper respiratory oxidase family. It depends on Cu(2+) as a cofactor. Requires heme as cofactor.

The protein resides in the cell membrane. The enzyme catalyses 4 Fe(II)-[cytochrome c] + O2 + 8 H(+)(in) = 4 Fe(III)-[cytochrome c] + 2 H2O + 4 H(+)(out). It functions in the pathway energy metabolism; oxidative phosphorylation. Its function is as follows. Cytochrome c oxidase is the component of the respiratory chain that catalyzes the reduction of oxygen to water. Subunits 1-3 form the functional core of the enzyme complex. Co I is the catalytic subunit of the enzyme. Electrons originating in cytochrome c are transferred via the copper A center of subunit 2 and heme a of subunit 1 to the bimetallic center formed by heme a3 and copper B. This cytochrome c oxidase shows proton pump activity across the membrane in addition to the electron transfer. This chain is Cytochrome c oxidase subunit 1 (ctaD), found in Bacillus subtilis (strain 168).